Here is a 289-residue protein sequence, read N- to C-terminus: Glycine--tRNA ligase alpha subunit (289 aa).

This sequence belongs to the class-II aminoacyl-tRNA synthetase family. Tetramer of two alpha and two beta subunits.

It localises to the cytoplasm. It carries out the reaction tRNA(Gly) + glycine + ATP = glycyl-tRNA(Gly) + AMP + diphosphate. The polypeptide is Glycine--tRNA ligase alpha subunit (Prochlorococcus marinus (strain MIT 9515)).